We begin with the raw amino-acid sequence, 473 residues long: ATP synthase subunit beta, chloroplastic (473 aa).

172 to 179 (GGAGVGKT) contacts ATP.

The protein belongs to the ATPase alpha/beta chains family. In terms of assembly, F-type ATPases have 2 components, CF(1) - the catalytic core - and CF(0) - the membrane proton channel. CF(1) has five subunits: alpha(3), beta(3), gamma(1), delta(1), epsilon(1). CF(0) has four main subunits: a(1), b(1), b'(1) and c(9-12).

Its subcellular location is the plastid. The protein localises to the chloroplast thylakoid membrane. It catalyses the reaction ATP + H2O + 4 H(+)(in) = ADP + phosphate + 5 H(+)(out). Functionally, produces ATP from ADP in the presence of a proton gradient across the membrane. The catalytic sites are hosted primarily by the beta subunits. This Equisetum arvense (Field horsetail) protein is ATP synthase subunit beta, chloroplastic.